Reading from the N-terminus, the 289-residue chain is Agamous-like MADS-box protein AGL93 (289 aa).

Residues 18–78 (QTCFKKSSLS…GKLIKTWPDD (61 aa)) form the MADS-box domain. The tract at residues 151-197 (EFGQTRAVSSTTNPLSPPPSLIEDHRHQQRTEPLMSGVSNTEQDLST) is disordered. Over residues 187–197 (GVSNTEQDLST) the composition is skewed to polar residues.

Expressed in pollen.

The protein localises to the nucleus. In terms of biological role, probable transcription factor. This is Agamous-like MADS-box protein AGL93 from Arabidopsis thaliana (Mouse-ear cress).